The primary structure comprises 457 residues: Acetylcholine receptor subunit alpha (457 aa).

A signal peptide spans 1-20; the sequence is MELSTVLLLLGLCSAGLVLG. At 21–230 the chain is on the extracellular side; sequence SEHETRLVAK…ITYHFVMQRL (210 aa). 2 cysteine pairs are disulfide-bonded: Cys-148–Cys-162 and Cys-212–Cys-213. An N-linked (GlcNAc...) asparagine glycan is attached at Asn-161. 3 helical membrane passes run 231–255, 263–281, and 297–316; these read PLYF…VFYL, MTLS…LVIV, and YMLF…VIVI. Topologically, residues 317 to 428 are cytoplasmic; that stretch reads NTHHRSPSTH…WKYVAMVMDH (112 aa). A helical transmembrane segment spans residues 429–447; it reads ILLGVFMLVCLIGTLAVFA.

It belongs to the ligand-gated ion channel (TC 1.A.9) family. Acetylcholine receptor (TC 1.A.9.1) subfamily. Alpha-1/CHRNA1 sub-subfamily. In terms of assembly, one of the alpha chains that assemble within the acetylcholine receptor, a pentamer of two alpha chains, a beta, a delta, and a gamma (in immature muscle) or epsilon (in mature muscle) chains. The muscle heteropentamer composed of alpha-1, beta-1, delta, epsilon subunits interacts with the alpha-conotoxin ImII.

It localises to the postsynaptic cell membrane. Its subcellular location is the cell membrane. The catalysed reaction is K(+)(in) = K(+)(out). It carries out the reaction Na(+)(in) = Na(+)(out). Its function is as follows. Upon acetylcholine binding, the AChR responds by an extensive change in conformation that affects all subunits and leads to opening of an ion-conducting channel across the plasma membrane. This Mus musculus (Mouse) protein is Acetylcholine receptor subunit alpha (Chrna1).